A 181-amino-acid chain; its full sequence is ATP synthase subunit delta (181 aa).

This sequence belongs to the ATPase delta chain family. In terms of assembly, F-type ATPases have 2 components, F(1) - the catalytic core - and F(0) - the membrane proton channel. F(1) has five subunits: alpha(3), beta(3), gamma(1), delta(1), epsilon(1). F(0) has three main subunits: a(1), b(2) and c(10-14). The alpha and beta chains form an alternating ring which encloses part of the gamma chain. F(1) is attached to F(0) by a central stalk formed by the gamma and epsilon chains, while a peripheral stalk is formed by the delta and b chains.

It is found in the cell inner membrane. In terms of biological role, f(1)F(0) ATP synthase produces ATP from ADP in the presence of a proton or sodium gradient. F-type ATPases consist of two structural domains, F(1) containing the extramembraneous catalytic core and F(0) containing the membrane proton channel, linked together by a central stalk and a peripheral stalk. During catalysis, ATP synthesis in the catalytic domain of F(1) is coupled via a rotary mechanism of the central stalk subunits to proton translocation. Functionally, this protein is part of the stalk that links CF(0) to CF(1). It either transmits conformational changes from CF(0) to CF(1) or is implicated in proton conduction. This chain is ATP synthase subunit delta, found in Cupriavidus taiwanensis (strain DSM 17343 / BCRC 17206 / CCUG 44338 / CIP 107171 / LMG 19424 / R1) (Ralstonia taiwanensis (strain LMG 19424)).